The following is a 128-amino-acid chain: Ribosome-binding factor A (128 aa).

Belongs to the RbfA family. As to quaternary structure, monomer. Binds 30S ribosomal subunits, but not 50S ribosomal subunits or 70S ribosomes.

It localises to the cytoplasm. In terms of biological role, one of several proteins that assist in the late maturation steps of the functional core of the 30S ribosomal subunit. Associates with free 30S ribosomal subunits (but not with 30S subunits that are part of 70S ribosomes or polysomes). Required for efficient processing of 16S rRNA. May interact with the 5'-terminal helix region of 16S rRNA. This is Ribosome-binding factor A from Pseudomonas paraeruginosa (strain DSM 24068 / PA7) (Pseudomonas aeruginosa (strain PA7)).